The sequence spans 533 residues: DELLA protein GAI (533 aa).

Positions 1 to 12 (MKRDHHHHHHQD) are enriched in basic residues. Residues 1–24 (MKRDHHHHHHQDKKTMMMNEEDDG) are disordered. The DELLA motif signature appears at 28–32 (DELLA). Positions 50 to 54 (LEQLE) match the LEXLE motif motif. The VHYNP motif motif lies at 73-77 (VHYNP). The region spanning 160–529 (VDSQENGVRL…RPLIATSAWK (370 aa)) is the GRAS domain. The tract at residues 167-221 (VRLVHALLACAEAVQKENLTVAEALVKQIGFLAVSQIGAMRKVATYFAEALARRI) is leucine repeat I (LRI). The LxCxE motif motif lies at 174 to 178 (LACAE). The tract at residues 240–305 (QMHFYETCPY…GGPPVFRLTG (66 aa)) is VHIID. The VHIID signature appears at 271–275 (VHVID). The tract at residues 319–351 (EVGCKLAHLAEAIHVEFEYRGFVANTLADLDAS) is leucine repeat II (LRII). Residues 363–450 (VAVNSVFELH…EVYLGKQICN (88 aa)) form a PFYRE region. The short motif at 371 to 375 (LHKLL) is the LXXLL motif element. Residues 453-529 (ACDGPDRVER…RPLIATSAWK (77 aa)) form an SAW region.

The protein belongs to the GRAS family. DELLA subfamily. As to quaternary structure, interacts directly with the GID2/SLY1 component of the SCF(GID2) complex. Interacts (via N-terminus) with GID1A, GID1B and GID1B (via N-terminus). Interacts with the BOI proteins BOI, BRG1, BRG2, BRG3 and NUP58. Interacts with TOPP4. Interacts with TCP14 and TCP15. Interacts with FLZ5. Binds to and coactivates GAF1/IDD2 and ENY/IDD1 at the promoter of GA20OX2 gene. Binds to PDF2 and ATML1. Interacts with the prefoldin alpha subunits PFD3 and PFD5 in the nucleus. Post-translationally, phosphorylated. In terms of processing, gibberellin (GA) induces dephosphorylation of GAI by TOPP4 and subsequent degradation by the proteasomal pathway. May be ubiquitinated, as suggested by its interaction with GID2. Ubiquitination is however unsure since in contrast to other DELLA proteins, it is not ubiquitinated and degraded upon GA application. Nevertheless, ubiquitination may be triggered by other processes. Ubiquitously expressed. Expressed in rosette leaves, roots, stems and inflorescences of greenhouse grown.

The protein resides in the nucleus. Its activity is regulated as follows. Transcription activation is repressed by gibberellic acid GA(3) in the presence of TPR4. Transcriptional regulator that acts as a repressor of the gibberellin (GA) signaling pathway. Transcription coactivator of the zinc finger transcription factors GAF1/IDD2 and ENY/IDD1 in regulation of gibberellin homeostasis and signaling. No effect of the BOI proteins on its stability. Probably acts by participating in large multiprotein complexes that repress transcription of GA-inducible genes. Positively regulates XERICO expression. In contrast to RGA, it is less sensitive to GA. Its activity is probably regulated by other phytohormones such as auxin and ethylene. Involved in the regulation of seed dormancy and germination, including glucose-induced delay of seed germination. Involved in the process leading to microtubules (MTs) dissociation in response to gibberellic acid (GA) probably by mediating the translocation of the prefoldin co-chaperone complex from the cytoplasm to the nucleus. The sequence is that of DELLA protein GAI from Arabidopsis thaliana (Mouse-ear cress).